We begin with the raw amino-acid sequence, 118 residues long: Large ribosomal subunit protein bL20 (118 aa).

This sequence belongs to the bacterial ribosomal protein bL20 family.

Functionally, binds directly to 23S ribosomal RNA and is necessary for the in vitro assembly process of the 50S ribosomal subunit. It is not involved in the protein synthesizing functions of that subunit. The chain is Large ribosomal subunit protein bL20 from Elusimicrobium minutum (strain Pei191).